The primary structure comprises 240 residues: Predicted GPI-anchored protein 58 (240 aa).

The signal sequence occupies residues 1–18 (MQFSTLVSLAAVIVSTNA). Residues 41–216 (HTNCPASSPA…NSTGPSSVPT (176 aa)) form a disordered region. The segment covering 51-86 (TPAPAPSASAPAPPAPEQPEPSAPAPAPSAPAPEQP) has biased composition (pro residues). Over residues 87–103 (EQPATPATPAAPATPAT) the composition is skewed to low complexity. Pro residues-rich tracts occupy residues 104 to 137 (PAAPEPSAPAPEQPASPAAPAPAPSAPAPAPEQP) and 153 to 192 (APAPSAPAPPAPEQPESAPAPAPSAPAPEQPESSPAPAPS). Residues 193–216 (APASVPEQPASSVSNSTGPSSVPT) are compositionally biased toward low complexity. A glycan (N-linked (GlcNAc...) asparagine) is linked at Asn207. A lipid anchor (GPI-anchor amidated glycine) is attached at Gly219. The propeptide at 220–240 (AAAKQYITGSVAVIAAALLAL) is removed in mature form.

The protein localises to the cell membrane. The protein is Predicted GPI-anchored protein 58 (PGA58) of Candida albicans (strain SC5314 / ATCC MYA-2876) (Yeast).